Reading from the N-terminus, the 98-residue chain is NADH-ubiquinone oxidoreductase chain 4L (98 aa).

Transmembrane regions (helical) follow at residues 1–21 (MSMV…GLLM), 29–49 (SLLC…MTIL), and 61–81 (IILL…LVMV).

This sequence belongs to the complex I subunit 4L family. Core subunit of respiratory chain NADH dehydrogenase (Complex I) which is composed of 45 different subunits.

The protein localises to the mitochondrion inner membrane. It carries out the reaction a ubiquinone + NADH + 5 H(+)(in) = a ubiquinol + NAD(+) + 4 H(+)(out). Its function is as follows. Core subunit of the mitochondrial membrane respiratory chain NADH dehydrogenase (Complex I) which catalyzes electron transfer from NADH through the respiratory chain, using ubiquinone as an electron acceptor. Part of the enzyme membrane arm which is embedded in the lipid bilayer and involved in proton translocation. The sequence is that of NADH-ubiquinone oxidoreductase chain 4L (MT-ND4L) from Phocarctos hookeri (Hooker's sea lion).